We begin with the raw amino-acid sequence, 148 residues long: MTPELNLKSLGAKTPYIFEYNSQLLEAFPNPNPNLDPLITLECKEFTSLCPITSQPDFGVIFIRYIPKDKMVESKSLKLYLFSYRNHGSFHESCINTILLDLVRLLEPKYLEVYGDFASRGGIAIKPFVNYAIKEYQDFKEKRLLNAK.

Cys50 (thioimide intermediate) is an active-site residue. Residue Asp57 is the Proton donor of the active site. Residues 72–74 and 91–92 contribute to the substrate site; these read VES and HE.

The protein belongs to the GTP cyclohydrolase I family. QueF type 1 subfamily.

It localises to the cytoplasm. The catalysed reaction is 7-aminomethyl-7-carbaguanine + 2 NADP(+) = 7-cyano-7-deazaguanine + 2 NADPH + 3 H(+). Its pathway is tRNA modification; tRNA-queuosine biosynthesis. In terms of biological role, catalyzes the NADPH-dependent reduction of 7-cyano-7-deazaguanine (preQ0) to 7-aminomethyl-7-deazaguanine (preQ1). This Helicobacter pylori (strain ATCC 700392 / 26695) (Campylobacter pylori) protein is NADPH-dependent 7-cyano-7-deazaguanine reductase.